The sequence spans 817 residues: Cargo-transport protein YPP1 (817 aa).

It belongs to the YPP1 family. As to quaternary structure, interacts with STT4 and ribosomes.

The protein localises to the cytoplasmic granule. The protein resides in the cell membrane. Involved in endocytosis. The polypeptide is Cargo-transport protein YPP1 (YPP1) (Saccharomyces cerevisiae (strain YJM789) (Baker's yeast)).